Here is a 165-residue protein sequence, read N- to C-terminus: UPF0114 protein ESA_00283 (165 aa).

A run of 3 helical transmembrane segments spans residues 15-35 (LLAPVYFGLSLALLALTVKFF), 53-73 (LILLLLSLVDMTLVGGLLVMV), and 136-156 (LMWYVIIHLTFVLSAFVMGYL).

The protein belongs to the UPF0114 family.

Its subcellular location is the cell membrane. The sequence is that of UPF0114 protein ESA_00283 from Cronobacter sakazakii (strain ATCC BAA-894) (Enterobacter sakazakii).